The sequence spans 570 residues: Phosphoglucomutase 1 (570 aa).

An N-acetylserine modification is found at Ser-2. Alpha-D-glucose 1,6-bisphosphate is bound by residues Arg-24 and Ser-120. The Phosphoserine intermediate role is filled by Ser-120. Residues Ser-120, Asp-291, Asp-293, and Asp-295 each coordinate Mg(2+). Ser-120 carries the phosphoserine modification. Asp-295, Arg-296, Thr-360, Glu-379, Ser-381, and Lys-392 together coordinate alpha-D-glucose 1,6-bisphosphate.

It belongs to the phosphohexose mutase family. In terms of assembly, monomer. The cofactor is Mg(2+).

The protein localises to the cytoplasm. It catalyses the reaction alpha-D-glucose 1-phosphate = alpha-D-glucose 6-phosphate. The catalysed reaction is O-phospho-L-seryl-[protein] + alpha-D-glucose 1-phosphate = alpha-D-glucose 1,6-bisphosphate + L-seryl-[protein]. The enzyme catalyses alpha-D-glucose 1,6-bisphosphate + L-seryl-[protein] = O-phospho-L-seryl-[protein] + alpha-D-glucose 6-phosphate. Its function is as follows. Minor phosphoglucomutase isozyme that catalyzes the reversible interconversion of alpha-D-glucose 1-phosphate and alpha-D-glucose 6-phosphate. The mechanism proceeds via the intermediate compound alpha-D-glucose 1,6-bisphosphate. Constitutes about 10-20% of the phosphoglucomutase activity in the cell. Key enzyme in hexose metabolism. The forward reaction is an essential step in the energy metabolism of galactose since the product of the galactose pathway enzymes in yeast is glucose 1-phosphate. The reverse reaction is an essential step for biosynthesis when carbon sources other than galactose are the energy source because glucose 1-phosphate is the starting point for the synthesis of UDP-glucose, which acts as a precursor for the synthesis of oligosaccharides and trehalose. This chain is Phosphoglucomutase 1, found in Saccharomyces cerevisiae (strain ATCC 204508 / S288c) (Baker's yeast).